A 533-amino-acid polypeptide reads, in one-letter code: Apolipoprotein N-acyltransferase (533 aa).

5 helical membrane passes run F17–V37, L72–L92, G116–M136, G165–M185, and F190–Y210. Positions V232–L499 constitute a CN hydrolase domain. The active-site Proton acceptor is the E274. The active site involves K352. Catalysis depends on C410, which acts as the Nucleophile. A helical membrane pass occupies residues P510–V530.

Belongs to the CN hydrolase family. Apolipoprotein N-acyltransferase subfamily.

The protein localises to the cell inner membrane. The enzyme catalyses N-terminal S-1,2-diacyl-sn-glyceryl-L-cysteinyl-[lipoprotein] + a glycerophospholipid = N-acyl-S-1,2-diacyl-sn-glyceryl-L-cysteinyl-[lipoprotein] + a 2-acyl-sn-glycero-3-phospholipid + H(+). It participates in protein modification; lipoprotein biosynthesis (N-acyl transfer). In terms of biological role, catalyzes the phospholipid dependent N-acylation of the N-terminal cysteine of apolipoprotein, the last step in lipoprotein maturation. This is Apolipoprotein N-acyltransferase from Chlorobaculum tepidum (strain ATCC 49652 / DSM 12025 / NBRC 103806 / TLS) (Chlorobium tepidum).